The chain runs to 228 residues: MLLPIPDVLTPAQLSQLRERLDAADWADGRITAGHQSAQAKDNAQLPEDSPIAREASALVLDALSRSSTFFSAALPRRIYPPLFNRYSGGQSFGYHVDNAVRYDRSRGGADPVRTDVSATLFLSDPESYDGGELVIEDTYGTQSVKLPAGHLVIYPGTSLHKVMPVTRGTRVASFFWIQSMLRNDAQRRLLFELDVSIRRLTQDTPGHPSLIQLTGVYHNLLRQWADV.

Residues 78–180 form the Fe2OG dioxygenase domain; it reads RIYPPLFNRY…RVASFFWIQS (103 aa). Fe cation contacts are provided by H96, D98, and H161. R171 is a binding site for 2-oxoglutarate.

Requires Fe(2+) as cofactor. The cofactor is L-ascorbate.

The protein is PKHD-type hydroxylase xcc-b100_1388 of Xanthomonas campestris pv. campestris (strain B100).